Reading from the N-terminus, the 633-residue chain is Putative oligopeptide transporter HI_0561 (633 aa).

The next 15 helical transmembrane spans lie at 8–28 (GVTF…LKFF), 45–65 (SAGT…MGYW), 70–90 (FWQT…FTIP), 128–148 (IAYG…LRVM), 180–200 (IGIV…GVAV), 230–250 (IGVG…MKPM), 281–301 (MIYI…HFIA), 311–331 (ILLV…VAAA), 345–365 (PISG…VSIG), 379–399 (FLTA…CISN), 420–440 (VALI…LEIL), 483–503 (WTYI…DAFL), 515–535 (VIAV…VIVG), 564–584 (LFSA…AFII), and 604–624 (WDTI…VIFA).

The protein belongs to the oligopeptide OPT transporter family.

The protein resides in the cell membrane. This chain is Putative oligopeptide transporter HI_0561, found in Haemophilus influenzae (strain ATCC 51907 / DSM 11121 / KW20 / Rd).